A 689-amino-acid polypeptide reads, in one-letter code: Glycine--tRNA ligase beta subunit (689 aa).

It belongs to the class-II aminoacyl-tRNA synthetase family. Tetramer of two alpha and two beta subunits.

Its subcellular location is the cytoplasm. The catalysed reaction is tRNA(Gly) + glycine + ATP = glycyl-tRNA(Gly) + AMP + diphosphate. The polypeptide is Glycine--tRNA ligase beta subunit (Klebsiella pneumoniae subsp. pneumoniae (strain ATCC 700721 / MGH 78578)).